A 1330-amino-acid chain; its full sequence is Pre-mRNA-splicing factor CWC22 homolog (1330 aa).

Residues 1–377 (MGESDAESDS…AAKITERQRK (377 aa)) are disordered. Residues 9–36 (DSSSNSSSSDTSSGSDSDARSESSSSES) show a composition bias toward low complexity. Residues 46 to 94 (QEESAKDAKKTDDTDRGEKRAKERDAGQDEQPTEQKKTPAAEPRSERQH) are compositionally biased toward basic and acidic residues. The segment covering 99 to 113 (AGVEKQQEEAVAAAE) has biased composition (low complexity). Residues 115–135 (ESEKLNEAKKVETPVQRKEEA) show a composition bias toward basic and acidic residues. Polar residues predominate over residues 138 to 148 (SSVTKELNSPK). A compositionally biased stretch (basic and acidic residues) spans 149–166 (AQEENAARELEERRKDEE). Residues 168-177 (PVTTNGSSKE) show a composition bias toward polar residues. Phosphothreonine is present on residues Thr-191 and Thr-201. Composition is skewed to basic and acidic residues over residues 191-201 (TADHIEEGEIT) and 208-236 (LPTK…SPDG). A phosphoserine mark is found at Ser-219 and Ser-221. Positions 252–277 (SRRRRRSRSKGSRTRSRSKSPIRRRS) are enriched in basic residues. Basic and acidic residues-rich tracts occupy residues 278 to 307 (NSLE…EREK) and 316 to 325 (SSRRRDDSRE). The span at 355-366 (TETNADNETVTE) shows a compositional bias: low complexity. In terms of domain architecture, MIF4G spans 420 to 603 (KKSIHGYINK…EVLFQIRKDG (184 aa)). Residues 660–697 (REILGSDDGSSSGSGSGSDSDSDSDGESGSDAEKKAEA) are disordered. Residues 665 to 678 (SDDGSSSGSGSGSD) show a composition bias toward low complexity. Residues 679-689 (SDSDSDGESGS) are compositionally biased toward acidic residues. Positions 710–826 (ALRRTIYLTI…SWDVLECIQL (117 aa)) constitute an MI domain. Positions 926–1330 (FRDGSAPAGN…RSSRRSKGRS (405 aa)) are disordered. Positions 941–951 (SSSSSSSSSSD) are enriched in low complexity. Acidic residues predominate over residues 952 to 963 (TDSEDSSEEDSS). Positions 964 to 976 (SDSSSESSSSDSS) are enriched in low complexity. Residues 980–1012 (KKKRKRKDKDKKKSKKATKEKSKKTKNKKKKKK) are compositionally biased toward basic residues. A compositionally biased stretch (basic and acidic residues) spans 1013-1033 (AEKEQEKEKEKQRKSKKEKEK). Residues 1034 to 1054 (DKKRKKEEKKAAKKKSKHRRK) are compositionally biased toward basic residues. The span at 1072–1082 (SESSDSSNSSS) shows a compositional bias: low complexity. The segment covering 1089-1110 (PQAKIKRQEHVEKNKFRGRTQD) has biased composition (basic and acidic residues). A Phosphothreonine modification is found at Thr-1108. 4 positions are modified to phosphoserine: Ser-1111, Ser-1121, Ser-1180, and Ser-1181. 2 stretches are compositionally biased toward basic and acidic residues: residues 1133–1195 (RRRD…VAHD) and 1203–1320 (SRSY…SRRE). Residue Tyr-1182 is modified to Phosphotyrosine. Positions 1321-1330 (RSSRRSKGRS) are enriched in basic residues.

This sequence belongs to the CWC22 family. In terms of assembly, component of the spliceosome C complex. Interacts with eIF4AIII.

The protein localises to the nucleus speckle. Functionally, required for pre-mRNA splicing and for exon-junction complex (EJC) assembly. Hinders eIF4AIII from non-specifically binding RNA and escorts it to the splicing machinery to promote EJC assembly on mature mRNAs. This chain is Pre-mRNA-splicing factor CWC22 homolog (ncm), found in Drosophila melanogaster (Fruit fly).